The following is a 351-amino-acid chain: ADP-glucose phosphorylase (351 aa).

Positions 1–63 (MTSPSHASDR…QNPNPKPSSC (63 aa)) are disordered. 41–44 (RAKR) contacts ADP-alpha-D-glucose. Positions 63 and 66 each coordinate Zn(2+). Residues 72-74 (ECA) and N94 contribute to the ADP-alpha-D-glucose site. H133 lines the Zn(2+) pocket. ADP-alpha-D-glucose contacts are provided by residues N173 and 179–182 (GASM). H184 contributes to the Zn(2+) binding site. H186 serves as the catalytic Tele-AMP-histidine intermediate. Q188 provides a ligand contact to ADP-alpha-D-glucose. Positions 216, 219, 255, and 310 each coordinate Zn(2+). ADP-alpha-D-glucose is bound by residues G321 and 325–326 (FE).

It belongs to the galactose-1-phosphate uridylyltransferase type 1 family. In terms of assembly, homodimer. Zn(2+) is required as a cofactor.

The catalysed reaction is alpha-D-glucose 1-phosphate + ADP + H(+) = ADP-alpha-D-glucose + phosphate. Catalyzes the conversion of ADP-glucose and inorganic phosphate (Pi) into glucose-1-phosphate and ADP. Does not possess galactose-1-phosphate uridylyltransferase activity. This Arabidopsis thaliana (Mouse-ear cress) protein is ADP-glucose phosphorylase.